The following is a 621-amino-acid chain: tRNA uridine 5-carboxymethylaminomethyl modification enzyme MnmG (621 aa).

9-14 (GGGHAG) is a binding site for FAD. Residue 270-284 (GPRYCPSIEDKIVKF) participates in NAD(+) binding.

The protein belongs to the MnmG family. As to quaternary structure, homodimer. Heterotetramer of two MnmE and two MnmG subunits. The cofactor is FAD.

The protein localises to the cytoplasm. NAD-binding protein involved in the addition of a carboxymethylaminomethyl (cmnm) group at the wobble position (U34) of certain tRNAs, forming tRNA-cmnm(5)s(2)U34. The protein is tRNA uridine 5-carboxymethylaminomethyl modification enzyme MnmG of Borreliella burgdorferi (strain ATCC 35210 / DSM 4680 / CIP 102532 / B31) (Borrelia burgdorferi).